A 2731-amino-acid polypeptide reads, in one-letter code: Teneurin-m (2731 aa).

Disordered stretches follow at residues 1–60 (MNPY…QNQQ) and 103–136 (LLEG…NNPN). Residues 1 to 229 (MNPYEYESTL…RKDLVARCSS (229 aa)) lie on the Cytoplasmic side of the membrane. Pro residues predominate over residues 110-119 (TAPPDVPPRN). Residues 120-136 (PTMSRMQNGRLTVNNPN) are compositionally biased toward polar residues. Residues 230–250 (PWFGIGSISVLFAFVVMLILL) traverse the membrane as a helical segment. The Extracellular segment spans residues 251-2731 (TTTGVIKWNQ…RQLKFGELSA (2481 aa)). The interval 321–387 (SSAATVTTAT…RTFPARSFPP (67 aa)) is disordered. Positions 322-370 (SAATVTTATSNSGTAQGLQSTSASAEATSSAATSSSQSSLTPSLSSSLA) are enriched in low complexity. EGF-like domains follow at residues 536–572 (GGDD…KECS), 574–606 (RHDE…KFCE), 643–676 (DALQ…DDCS), and 738–774 (TIEG…PDCG). 11 disulfides stabilise this stretch: cysteine 540–cysteine 549, cysteine 545–cysteine 560, cysteine 562–cysteine 571, cysteine 578–cysteine 589, cysteine 583–cysteine 594, cysteine 596–cysteine 605, cysteine 651–cysteine 664, cysteine 666–cysteine 675, cysteine 742–cysteine 752, cysteine 746–cysteine 762, and cysteine 764–cysteine 773. Residue asparagine 857 is glycosylated (N-linked (GlcNAc...) asparagine). NHL repeat units lie at residues 1160–1201 (ECPD…IMTD), 1202–1246 (GSIR…VRDT), 1391–1434 (STAY…VRVI), and 1459–1502 (CFEA…VMSS). One copy of the YD repeat lies at 1618–1652 (TGLLRTKLDSTGRSYVYNYDEFGRLTSAVTPTGRV). A disordered region spans residues 2691-2731 (LADDPGNVAFQRDAKRKRRKTGSSHRSASNRRQLKFGELSA). Residues 2704 to 2724 (AKRKRRKTGSSHRSASNRRQL) are compositionally biased toward basic residues.

Belongs to the tenascin family. Teneurin subfamily. As to quaternary structure, homodimer. Heterodimer with Ten-a. Interacts with Ten-a; the interaction occurs at the neuromuscular junction. Interacts with alpha-Spec and cher. Post-translationally, phosphorylated. Phosphorylation occurs at tyrosine residues. Proteolytically cleaved. Expressed in muscles and motor neurons (at protein level).

It localises to the cytoplasm. It is found in the postsynaptic cell membrane. The protein localises to the synapse. The protein resides in the synaptosome. Its subcellular location is the membrane. Involved in neural development, regulating the establishment of proper connectivity within the nervous system. Acts as a homophilic and heterophilic synaptic cell adhesion molecule that drives synapse assembly. Promotes bi-directional trans-synaptic signaling with Ten-a to organize neuromuscular synapses. Functions in olfactory synaptic partner matching by promoting homophilic cell adhesion between pre-synaptic olfactory receptor neurons (ORN) axons and post-synaptic projection neurons (PN) dendrites partner in the developing antennal lobe to form stable connections. Also required for peripheral axon growth cone guidance and target recognition of motor neurons. The polypeptide is Teneurin-m (Ten-m) (Drosophila melanogaster (Fruit fly)).